The sequence spans 158 residues: SsrA-binding protein (158 aa).

The disordered stretch occupies residues 131-158 (GKKTHDKRETEKKRDWNREKARLLRDRG). The segment covering 136-158 (DKRETEKKRDWNREKARLLRDRG) has biased composition (basic and acidic residues).

It belongs to the SmpB family.

The protein localises to the cytoplasm. In terms of biological role, required for rescue of stalled ribosomes mediated by trans-translation. Binds to transfer-messenger RNA (tmRNA), required for stable association of tmRNA with ribosomes. tmRNA and SmpB together mimic tRNA shape, replacing the anticodon stem-loop with SmpB. tmRNA is encoded by the ssrA gene; the 2 termini fold to resemble tRNA(Ala) and it encodes a 'tag peptide', a short internal open reading frame. During trans-translation Ala-aminoacylated tmRNA acts like a tRNA, entering the A-site of stalled ribosomes, displacing the stalled mRNA. The ribosome then switches to translate the ORF on the tmRNA; the nascent peptide is terminated with the 'tag peptide' encoded by the tmRNA and targeted for degradation. The ribosome is freed to recommence translation, which seems to be the essential function of trans-translation. This Brucella abortus biovar 1 (strain 9-941) protein is SsrA-binding protein.